A 403-amino-acid chain; its full sequence is Solanesyl-diphosphate synthase 2, chloroplastic (403 aa).

The N-terminal 62 residues, 1–62 (MLSVSCPRVY…QPGLAAVDVP (62 aa)), are a transit peptide targeting the chloroplast. The isopentenyl diphosphate site is built by Lys-123, Arg-126, and His-161. Mg(2+) is bound by residues Asp-168 and Asp-172. Arg-177 provides a ligand contact to an all-trans-polyprenyl diphosphate. Arg-178 contributes to the isopentenyl diphosphate binding site. An all-trans-polyprenyl diphosphate is bound by residues Lys-254, Thr-255, Gln-292, and Lys-309.

This sequence belongs to the FPP/GGPP synthase family. In terms of assembly, homodimer. Interacts with FBN5. Mg(2+) is required as a cofactor. Expressed in leaves, stems and roots. Highest expression in leaves and roots.

The protein resides in the plastid. The protein localises to the chloroplast. It catalyses the reaction 7 isopentenyl diphosphate + (2E)-geranyl diphosphate = all-trans-nonaprenyl diphosphate + 7 diphosphate. In terms of biological role, involved in providing solanesyl diphosphate for plastoquinone-9 (PQ-9) formation. Geranyl diphosphate is the preferred substrate. This chain is Solanesyl-diphosphate synthase 2, chloroplastic, found in Oryza sativa subsp. japonica (Rice).